The following is a 79-amino-acid chain: Small ribosomal subunit protein bS18 (79 aa).

This sequence belongs to the bacterial ribosomal protein bS18 family. As to quaternary structure, part of the 30S ribosomal subunit. Forms a tight heterodimer with protein bS6.

In terms of biological role, binds as a heterodimer with protein bS6 to the central domain of the 16S rRNA, where it helps stabilize the platform of the 30S subunit. The sequence is that of Small ribosomal subunit protein bS18 from Enterococcus faecalis (strain ATCC 700802 / V583).